The sequence spans 471 residues: Probable ribonuclease FAU-1 (471 aa).

The protein belongs to the FAU-1 family.

Functionally, probable RNase involved in rRNA stability through maturation and/or degradation of precursor rRNAs. Binds to RNA in loop regions with AU-rich sequences. This is Probable ribonuclease FAU-1 from Caldivirga maquilingensis (strain ATCC 700844 / DSM 13496 / JCM 10307 / IC-167).